The following is a 145-amino-acid chain: D-aminoacyl-tRNA deacylase (145 aa).

Positions 137–138 (GP) match the Gly-cisPro motif, important for rejection of L-amino acids motif.

Belongs to the DTD family. As to quaternary structure, homodimer.

The protein resides in the cytoplasm. It catalyses the reaction glycyl-tRNA(Ala) + H2O = tRNA(Ala) + glycine + H(+). It carries out the reaction a D-aminoacyl-tRNA + H2O = a tRNA + a D-alpha-amino acid + H(+). In terms of biological role, an aminoacyl-tRNA editing enzyme that deacylates mischarged D-aminoacyl-tRNAs. Also deacylates mischarged glycyl-tRNA(Ala), protecting cells against glycine mischarging by AlaRS. Acts via tRNA-based rather than protein-based catalysis; rejects L-amino acids rather than detecting D-amino acids in the active site. By recycling D-aminoacyl-tRNA to D-amino acids and free tRNA molecules, this enzyme counteracts the toxicity associated with the formation of D-aminoacyl-tRNA entities in vivo and helps enforce protein L-homochirality. The chain is D-aminoacyl-tRNA deacylase from Enterobacter sp. (strain 638).